The chain runs to 516 residues: Cyclic AMP response element-binding protein A (516 aa).

3 positions are modified to phosphoserine: Ser-75, Ser-79, and Ser-82. Disordered stretches follow at residues Lys-213–Gln-237, Lys-294–Ala-338, and Pro-353–Thr-408. Over residues Ser-221–Gln-237 the composition is skewed to low complexity. Positions Arg-361–Arg-392 are enriched in low complexity. Residues Ser-441–Leu-504 form the bZIP domain. The tract at residues Lys-443–Lys-463 is basic motif. Residues Leu-469–Leu-476 are leucine-zipper.

The protein belongs to the bZIP family. May bind DNA as heterodimers with other bZIP proteins. In all cell types examined, including developing salivary gland in embryos and in adults, brain and optic lobe cell bodies, salivary gland, midgut epithelial cells of the cardia, female ovarian columnar follicle cells and male seminal vesicle, ejaculatory duct, and ejaculatory bulb.

The protein localises to the nucleus. In terms of biological role, transcriptional activator. Binds to fat body-specific enhancers of alcohol dehydrogenase (ADH) and yolk protein genes. BBF-2 may play a role in fat body gene expression. It binds the consensus sequence 5'-T[AC]NACGTAN[TG]C-3'. The sequence is that of Cyclic AMP response element-binding protein A (CrebA) from Drosophila melanogaster (Fruit fly).